A 577-amino-acid polypeptide reads, in one-letter code: Beta-glucosidase 30 (577 aa).

Residues 1–23 (MAKGSWFFIILFIISMLENMINS) form the signal peptide. A beta-D-glucoside contacts are provided by residues Q45, H148, and 193-194 (NE). The active-site Proton donor is the E194. C213 and C221 form a disulfide bridge. N328 carries an N-linked (GlcNAc...) asparagine glycan. An a beta-D-glucoside-binding site is contributed by Y338. N368 carries N-linked (GlcNAc...) asparagine glycosylation. Residues E410, W460, 467–468 (EW), and F476 contribute to the a beta-D-glucoside site. Residue E410 is the Nucleophile of the active site. Residues N524 and N544 are each glycosylated (N-linked (GlcNAc...) asparagine).

It belongs to the glycosyl hydrolase 1 family.

The enzyme catalyses Hydrolysis of terminal, non-reducing beta-D-glucosyl residues with release of beta-D-glucose.. The polypeptide is Beta-glucosidase 30 (Arabidopsis thaliana (Mouse-ear cress)).